The primary structure comprises 339 residues: Photosystem II assembly lipoprotein Ycf48 (339 aa).

An N-terminal signal peptide occupies residues 1 to 22; it reads MVIVKSWQKIFTLLVVLLLCIG. Cysteine 23 carries N-palmitoyl cysteine lipidation. A lipid anchor (S-diacylglycerol cysteine) is attached at cysteine 23.

Belongs to the Ycf48 family. Part of early PSII assembly complexes which includes D1 (psbA) and PsbI; not found in mature PSII. Binds to the lumenal side of PSII complexes. Interacts with YidC.

The protein localises to the cellular thylakoid membrane. In terms of biological role, a factor required for optimal assembly of photosystem II (PSII), acting in the early stages of PSII assembly. Also plays a role in replacement of photodamaged D1 (psbA). Assists YidC in synthesis of chlorophyll-binding proteins. This chain is Photosystem II assembly lipoprotein Ycf48, found in Nostoc sp. (strain PCC 7120 / SAG 25.82 / UTEX 2576).